The primary structure comprises 358 residues: tRNA-specific 2-thiouridylase MnmA (358 aa).

Residues 8-15 and Met-34 each bind ATP; that span reads GMSGGVDS. The active-site Nucleophile is Cys-103. A disulfide bridge links Cys-103 with Cys-199. Gly-127 serves as a coordination point for ATP. Residues 149 to 151 are interaction with tRNA; that stretch reads KDQ. Cys-199 serves as the catalytic Cysteine persulfide intermediate. The segment at 305-306 is interaction with tRNA; the sequence is RY.

This sequence belongs to the MnmA/TRMU family.

The protein localises to the cytoplasm. The catalysed reaction is S-sulfanyl-L-cysteinyl-[protein] + uridine(34) in tRNA + AH2 + ATP = 2-thiouridine(34) in tRNA + L-cysteinyl-[protein] + A + AMP + diphosphate + H(+). Functionally, catalyzes the 2-thiolation of uridine at the wobble position (U34) of tRNA, leading to the formation of s(2)U34. The chain is tRNA-specific 2-thiouridylase MnmA from Clostridium beijerinckii (strain ATCC 51743 / NCIMB 8052) (Clostridium acetobutylicum).